A 605-amino-acid polypeptide reads, in one-letter code: Cell wall integrity and stress response component 4 (605 aa).

Positions 1–26 (MQTSMVSAKVSIWLVCSVICSSLVRA) are cleaved as a signal peptide. One can recognise a WSC domain in the interval 27-110 (TQSVCSSQNT…DKDLFGYIYL (84 aa)). The disordered stretch occupies residues 151–305 (SPTLTSTSTT…PSSTTVTYTS (155 aa)). 4 N-linked (GlcNAc...) asparagine glycosylation sites follow: asparagine 340, asparagine 386, asparagine 389, and asparagine 398. Residues 381-399 (RITNNNNSNTTNSNTPTNK) show a composition bias toward low complexity. The disordered stretch occupies residues 381–404 (RITNNNNSNTTNSNTPTNKSTEKK). The chain crosses the membrane as a helical span at residues 415–435 (ATFVVVGVVCLVIICILIYLI). Asparagine 479 carries N-linked (GlcNAc...) asparagine glycosylation. The segment at 494-521 (GQIMSESPSPRQSTYSLTAGSPPNDPST) is disordered. Residues 497-521 (MSESPSPRQSTYSLTAGSPPNDPST) are compositionally biased toward polar residues. 2 N-linked (GlcNAc...) asparagine glycosylation sites follow: asparagine 553 and asparagine 583.

It localises to the membrane. The protein is Cell wall integrity and stress response component 4 (WSC4) of Saccharomyces cerevisiae (strain ATCC 204508 / S288c) (Baker's yeast).